Reading from the N-terminus, the 364-residue chain is Histidinol-phosphate aminotransferase (364 aa).

Lys-222 carries the N6-(pyridoxal phosphate)lysine modification.

It belongs to the class-II pyridoxal-phosphate-dependent aminotransferase family. Histidinol-phosphate aminotransferase subfamily. In terms of assembly, homodimer. Requires pyridoxal 5'-phosphate as cofactor.

It carries out the reaction L-histidinol phosphate + 2-oxoglutarate = 3-(imidazol-4-yl)-2-oxopropyl phosphate + L-glutamate. It participates in amino-acid biosynthesis; L-histidine biosynthesis; L-histidine from 5-phospho-alpha-D-ribose 1-diphosphate: step 7/9. The polypeptide is Histidinol-phosphate aminotransferase (Brevibacillus brevis (strain 47 / JCM 6285 / NBRC 100599)).